Here is a 118-residue protein sequence, read N- to C-terminus: Large ribosomal subunit protein bL19 (118 aa).

This sequence belongs to the bacterial ribosomal protein bL19 family.

This protein is located at the 30S-50S ribosomal subunit interface and may play a role in the structure and function of the aminoacyl-tRNA binding site. This chain is Large ribosomal subunit protein bL19, found in Campylobacter hominis (strain ATCC BAA-381 / DSM 21671 / CCUG 45161 / LMG 19568 / NCTC 13146 / CH001A).